We begin with the raw amino-acid sequence, 1627 residues long: Adhesin P1 (1627 aa).

The N-terminal stretch at 1–59 (MHQTKKTALSKSTWILILTATASLATGLTVVGHFTSTTTTLKRQQFSYTRPDEVALRHT) is a signal peptide. Disordered regions lie at residues 219-238 (LPQQRTESGQNTSTTGAMFG), 252-355 (NEKL…PWRP), 898-953 (WRND…TTQD), and 1274-1362 (SFGT…TGND). Over residues 224 to 234 (TESGQNTSTTG) the composition is skewed to polar residues. Residues 261 to 276 (TGSSTTSGSGQSTQRG) are compositionally biased toward low complexity. Residues 282–297 (TKVKALKIEVKKKSDS) are compositionally biased toward basic and acidic residues. 3 stretches are compositionally biased toward polar residues: residues 903–933 (ASSGQSDENHTKFTSATGMDQQGQSGTSAGN), 939–953 (QDNISKSGDSLTTQD), and 1274–1297 (SFGTDHSTQPQPQSLKTTTPVFGT). Positions 1307 to 1320 (SGGGAGGGSSGSGQ) are enriched in gly residues. Residues 1341–1352 (STSDGNTSSTNN) show a composition bias toward low complexity. Positions 1403–1415 (GPQSVKFKSPDQI) are cytadherence epitope. A helical membrane pass occupies residues 1527 to 1547 (AITVPIVVIVLSVTLGLAIGI). The interval 1589-1627 (QAPKRLKQTSAAKPGAPRPPVPPKPGAPKPPVQPPKKPA) is disordered. Positions 1604–1627 (APRPPVPPKPGAPKPPVQPPKKPA) are enriched in pro residues.

The protein belongs to the adhesin P1 family.

It is found in the cell membrane. The protein resides in the cell projection. Its subcellular location is the attachment organelle. The protein localises to the cell surface. Its function is as follows. The protein is the major adhesin mediating the attachment of this mycoplasma to respiratory epithelium. The polypeptide is Adhesin P1 (mgpA) (Mycoplasma pneumoniae (strain ATCC 29342 / M129 / Subtype 1) (Mycoplasmoides pneumoniae)).